The sequence spans 919 residues: Probable dipeptidyl-aminopeptidase B (919 aa).

A compositionally biased stretch (basic and acidic residues) spans 1-10 (MRRSDGHEET). Positions 1-53 (MRRSDGHEETSEFLPMTHSRSVSAASQTSTDSSLSTESLFPREQKPFPNAMGG) are disordered. Over 1-92 (MRRSDGHEET…AATGGGRARR (92 aa)) the chain is Cytoplasmic. Residues 21–38 (SVSAASQTSTDSSLSTES) are compositionally biased toward low complexity. Residues 93-113 (IFWILVLLCLGGWLLAFVLFL) traverse the membrane as a helical; Signal-anchor for type II membrane protein segment. Over 114-919 (TGGRANYQTA…MKRSLRLLSP (806 aa)) the chain is Vacuolar. N200, N352, and N643 each carry an N-linked (GlcNAc...) asparagine glycan. The active-site Charge relay system is the S757. N811 is a glycosylation site (N-linked (GlcNAc...) asparagine). Catalysis depends on charge relay system residues D834 and H867.

This sequence belongs to the peptidase S9B family.

The protein resides in the vacuole membrane. It carries out the reaction Release of an N-terminal dipeptide, Xaa-Yaa-|-Zaa-, from a polypeptide, preferentially when Yaa is Pro, provided Zaa is neither Pro nor hydroxyproline.. In terms of biological role, type IV dipeptidyl-peptidase which removes N-terminal dipeptides sequentially from polypeptides having unsubstituted N-termini provided that the penultimate residue is proline. In Aspergillus fumigatus (strain CBS 144.89 / FGSC A1163 / CEA10) (Neosartorya fumigata), this protein is Probable dipeptidyl-aminopeptidase B (dapB).